Reading from the N-terminus, the 146-residue chain is Ribosomal RNA large subunit methyltransferase H (146 aa).

Residues Leu68, Gly95, and 114–119 (LSSLTF) contribute to the S-adenosyl-L-methionine site.

This sequence belongs to the RNA methyltransferase RlmH family. As to quaternary structure, homodimer.

It localises to the cytoplasm. The catalysed reaction is pseudouridine(1915) in 23S rRNA + S-adenosyl-L-methionine = N(3)-methylpseudouridine(1915) in 23S rRNA + S-adenosyl-L-homocysteine + H(+). Functionally, specifically methylates the pseudouridine at position 1915 (m3Psi1915) in 23S rRNA. This Thermodesulfovibrio yellowstonii (strain ATCC 51303 / DSM 11347 / YP87) protein is Ribosomal RNA large subunit methyltransferase H.